The sequence spans 144 residues: Large ribosomal subunit protein uL16 (144 aa).

Positions 1 to 19 (MLLPKRVKYRRQHRPKTTG) are enriched in basic residues. Residues 1–23 (MLLPKRVKYRRQHRPKTTGRSKG) are disordered.

The protein belongs to the universal ribosomal protein uL16 family. Part of the 50S ribosomal subunit.

Binds 23S rRNA and is also seen to make contacts with the A and possibly P site tRNAs. The protein is Large ribosomal subunit protein uL16 of Staphylococcus saprophyticus subsp. saprophyticus (strain ATCC 15305 / DSM 20229 / NCIMB 8711 / NCTC 7292 / S-41).